We begin with the raw amino-acid sequence, 242 residues long: Protein fmp-52, mitochondrial (242 aa).

A mitochondrion-targeting transit peptide spans 1-87 (MSTSTPTSTA…VISSLGTTRV (87 aa)). A disordered region spans residues 33–58 (SSQVQTISRRAPANPTNSSRLSPTVN). A compositionally biased stretch (polar residues) spans 35-58 (QVQTISRRAPANPTNSSRLSPTVN).

It belongs to the FMP52 family.

It is found in the mitochondrion outer membrane. The protein is Protein fmp-52, mitochondrial (fmp-52) of Neurospora crassa (strain ATCC 24698 / 74-OR23-1A / CBS 708.71 / DSM 1257 / FGSC 987).